A 393-amino-acid chain; its full sequence is Dwarfin sma-3 (393 aa).

One can recognise an MH1 domain in the interval 10–139; the sequence is PAVKKLLGWK…YQRLSRPQGL (130 aa). Zn(2+) contacts are provided by C65, C110, C124, and H129. Residues 136 to 190 form a disordered region; it reads PQGLNSSMPSPQPISSPNTIWQSSGSSTASCASSPSPSVFSEDGGEVQVHQRPPP. Over residues 141-176 the composition is skewed to low complexity; it reads SSMPSPQPISSPNTIWQSSGSSTASCASSPSPSVFS. The MH2 domain maps to 197-393; it reads WAQITYFELN…TNLMEPNSMT (197 aa).

The protein belongs to the dwarfin/SMAD family.

It is found in the cytoplasm. The protein resides in the nucleus. Functionally, involved in TGF-beta pathway. Plays a role in male tail tip morphogenesis. In Caenorhabditis elegans, this protein is Dwarfin sma-3.